The primary structure comprises 111 residues: Putative protein YddJ (111 aa).

The protein is Putative protein YddJ (yddJ) of Escherichia coli (strain K12).